The chain runs to 257 residues: Aspartate/glutamate leucyltransferase (257 aa).

This sequence belongs to the R-transferase family. Bpt subfamily.

The protein resides in the cytoplasm. It carries out the reaction N-terminal L-glutamyl-[protein] + L-leucyl-tRNA(Leu) = N-terminal L-leucyl-L-glutamyl-[protein] + tRNA(Leu) + H(+). It catalyses the reaction N-terminal L-aspartyl-[protein] + L-leucyl-tRNA(Leu) = N-terminal L-leucyl-L-aspartyl-[protein] + tRNA(Leu) + H(+). In terms of biological role, functions in the N-end rule pathway of protein degradation where it conjugates Leu from its aminoacyl-tRNA to the N-termini of proteins containing an N-terminal aspartate or glutamate. The chain is Aspartate/glutamate leucyltransferase from Nitrobacter winogradskyi (strain ATCC 25391 / DSM 10237 / CIP 104748 / NCIMB 11846 / Nb-255).